Reading from the N-terminus, the 460-residue chain is Argininosuccinate lyase (460 aa).

The protein belongs to the lyase 1 family. Argininosuccinate lyase subfamily.

The protein resides in the cytoplasm. The enzyme catalyses 2-(N(omega)-L-arginino)succinate = fumarate + L-arginine. Its pathway is amino-acid biosynthesis; L-arginine biosynthesis; L-arginine from L-ornithine and carbamoyl phosphate: step 3/3. The sequence is that of Argininosuccinate lyase from Streptococcus uberis (strain ATCC BAA-854 / 0140J).